Reading from the N-terminus, the 745-residue chain is Jacalin-related lectin 4 (745 aa).

5 consecutive Jacalin-type lectin domains span residues 2-148 (AQKL…YFAP), 151-294 (PTKF…YFSP), 307-448 (AEKL…YFVT), 451-594 (PTKF…YFSR), and 601-744 (AETL…YVMP).

The protein belongs to the jacalin lectin family.

The protein is Jacalin-related lectin 4 (JAL4) of Arabidopsis thaliana (Mouse-ear cress).